The primary structure comprises 34 residues: Omega-ctenitoxin-Pn2a (34 aa).

3 cysteine pairs are disulfide-bonded: Cys-2–Cys-16, Cys-9–Cys-26, and Cys-15–Cys-28.

The protein belongs to the neurotoxin 02 (plectoxin) family. 01 (Tx3) subfamily. In terms of tissue distribution, expressed by the venom gland.

The protein resides in the secreted. Functionally, inhibits all known high-voltage activated calcium channels (L-, P/Q- and R-type currents) (Cav), and most effectively the P/Q- (Cav2.1/CACNA1A) and R-type (Cav2.3/CACNA1E) currents. In rat brain, inhibits glutamate release, neuronal death and loss of neurotransmission in the hippocampus resulting from ischemia. In vivo, induces rapid general flaccid paralysis followed by death in 10-30 minutes at dose levels of 5 ug per mouse. This Phoneutria nigriventer (Brazilian armed spider) protein is Omega-ctenitoxin-Pn2a.